We begin with the raw amino-acid sequence, 163 residues long: Cyclic pyranopterin monophosphate synthase (163 aa).

Substrate contacts are provided by residues 75-77 (LCH) and 115-116 (ME). Asp-130 is an active-site residue.

Belongs to the MoaC family. In terms of assembly, homohexamer; trimer of dimers.

It carries out the reaction (8S)-3',8-cyclo-7,8-dihydroguanosine 5'-triphosphate = cyclic pyranopterin phosphate + diphosphate. It participates in cofactor biosynthesis; molybdopterin biosynthesis. Catalyzes the conversion of (8S)-3',8-cyclo-7,8-dihydroguanosine 5'-triphosphate to cyclic pyranopterin monophosphate (cPMP). The polypeptide is Cyclic pyranopterin monophosphate synthase (Variovorax paradoxus (strain S110)).